A 594-amino-acid chain; its full sequence is MRIRSNVLLLSTAGALALVWFAVVFSWDDKSIFGIPTPGHAVASAYDSSVTLGTFNDMEVDSYVTNIYDNAPVLGCYDLSYHGLLKVSPKHEILCDMKFIRARVLETEAYAALKDLEHKKLTEEEKIEKHWFTFYGSSVFLPDHDVHYLVRRVVFSGEGKANRPITSILVAQIYDKNWNELNGHFLNVLNPNTGKLQHHAFPQVLPIAVNWDRNSKYRGQEDPRVVLRRGRFGPDPLVMFNTLTQNNKLRRLFTISPFDQYKTVMYRTNAFKMQTTEKNWVPFFLKDDQESVHFVYSFNPLRVLNCSLDNGACDVLFELPHDFGMSSELRGATPMLNLPQAIPMADDKEIWVSFPRTRISDCGCSETMYRPMLMLFVREGTNFFAELLSSSIDFGLEVIPYTGDGLPCSSGQSVLIPNSIDNWEVTGSNGEDILSLTFSEADKSTSVVHIRGLYKYLSELDGYGGPEAEDEHNFQRILSDLHFDGKKTIENFKKVQSCALDAAKAYCKEYGVTRGEEDRLKNKEKERKIEEKRKKEEERKKKEEEKKKKEEEEKKKKEEEEEEEKRLKELKKKLKELQEELEKQKDEVKDTKAK.

The Cytoplasmic portion of the chain corresponds to 1 to 6 (MRIRSN). A helical transmembrane segment spans residues 7-27 (VLLLSTAGALALVWFAVVFSW). The Extracellular portion of the chain corresponds to 28–594 (DDKSIFGIPT…KDEVKDTKAK (567 aa)). Asparagine 305 is a glycosylation site (N-linked (GlcNAc...) asparagine). The stretch at 512–594 (VTRGEEDRLK…KDEVKDTKAK (83 aa)) forms a coiled coil. The segment covering 517 to 558 (EDRLKNKEKERKIEEKRKKEEERKKKEEEKKKKEEEEKKKKE) has biased composition (basic and acidic residues). The interval 517–564 (EDRLKNKEKERKIEEKRKKEEERKKKEEEKKKKEEEEKKKKEEEEEEE) is disordered.

This sequence belongs to the BMT family.

It localises to the membrane. Its function is as follows. Beta-mannosyltransferase involved in cell wall biosynthesis. The sequence is that of Beta-mannosyltransferase 3 (BMT3) from Komagataella phaffii (strain ATCC 76273 / CBS 7435 / CECT 11047 / NRRL Y-11430 / Wegner 21-1) (Yeast).